The following is a 786-amino-acid chain: LPS-assembly protein LptD (786 aa).

A signal peptide spans M1 to A39. The tract at residues P767–E786 is disordered. A compositionally biased stretch (pro residues) spans T770 to M779.

The protein belongs to the LptD family. Component of the lipopolysaccharide transport and assembly complex. Interacts with LptE and LptA.

The protein resides in the cell outer membrane. Together with LptE, is involved in the assembly of lipopolysaccharide (LPS) at the surface of the outer membrane. This Burkholderia lata (strain ATCC 17760 / DSM 23089 / LMG 22485 / NCIMB 9086 / R18194 / 383) protein is LPS-assembly protein LptD.